We begin with the raw amino-acid sequence, 1077 residues long: Ubiquitin-activating enzyme E1 2 (1077 aa).

The disordered stretch occupies residues 16–36 (SPMKKRRIDHTESADGSAINA). ATP-binding positions include A499, D525, R536, K549, and 597 to 598 (DN). The Glycyl thioester intermediate role is filled by C653.

This sequence belongs to the ubiquitin-activating E1 family. In terms of assembly, monomer. As to expression, expressed in leaves, flowers, roots and stems. Detected in germinating seeds, cotyledons, hypocotyls, vascular tissues, anthers, filaments, pollen, style, stigma, sepals, petals, ovary, developing ovules, funiculi and silique walls.

It carries out the reaction ATP + ubiquitin + [E1 ubiquitin-activating enzyme]-L-cysteine = AMP + diphosphate + S-ubiquitinyl-[E1 ubiquitin-activating enzyme]-L-cysteine.. Its pathway is protein modification; protein ubiquitination. Activates ubiquitin by first adenylating its C-terminal glycine residue with ATP, and thereafter linking this residue to the side chain of a cysteine residue in E1, yielding a ubiquitin-E1 thioester and free AMP. This chain is Ubiquitin-activating enzyme E1 2 (UBA2), found in Arabidopsis thaliana (Mouse-ear cress).